A 205-amino-acid chain; its full sequence is MLKELRPAIVILVALTIITGLIYPLAMTGAAQVLFPYQAQGSLIEQGGKTIGSALIGQSFTADRYFHGRPSATTAPDPKDASKTVPAPYNAVNSMGSNLGPTSKALADRLRQDVATLKAQNPSAAVPVDLVTASGSGLDPDISPQAARFQVPRVAKARNLPEAEVETLIDSRTEGRDLGFLGEPRVNVLKLNLALDRMAASGQPR.

Residues 7–27 (PAIVILVALTIITGLIYPLAM) traverse the membrane as a helical segment.

The protein belongs to the KdpC family. In terms of assembly, the system is composed of three essential subunits: KdpA, KdpB and KdpC.

It is found in the cell inner membrane. Functionally, part of the high-affinity ATP-driven potassium transport (or Kdp) system, which catalyzes the hydrolysis of ATP coupled with the electrogenic transport of potassium into the cytoplasm. This subunit acts as a catalytic chaperone that increases the ATP-binding affinity of the ATP-hydrolyzing subunit KdpB by the formation of a transient KdpB/KdpC/ATP ternary complex. This is Potassium-transporting ATPase KdpC subunit from Nitrobacter hamburgensis (strain DSM 10229 / NCIMB 13809 / X14).